A 270-amino-acid chain; its full sequence is Catechol 1,2-dioxygenase (270 aa).

4 residues coordinate Fe cation: Tyr152, Tyr186, His210, and His212.

The protein belongs to the intradiol ring-cleavage dioxygenase family. Fe(3+) serves as cofactor.

It catalyses the reaction catechol + O2 = cis,cis-muconate + 2 H(+). The sequence is that of Catechol 1,2-dioxygenase (catA) from Rhodococcus opacus (Nocardia opaca).